A 260-amino-acid polypeptide reads, in one-letter code: Ribosomal RNA small subunit methyltransferase J (260 aa).

S-adenosyl-L-methionine contacts are provided by residues 125–126 (ER) and Asp-179. A disordered region spans residues 234-260 (IDGPKPSHALDGKSSRYDIYPKKALKP). Residues 241-254 (HALDGKSSRYDIYP) are compositionally biased toward basic and acidic residues.

The protein belongs to the methyltransferase superfamily. RsmJ family.

Its subcellular location is the cytoplasm. It carries out the reaction guanosine(1516) in 16S rRNA + S-adenosyl-L-methionine = N(2)-methylguanosine(1516) in 16S rRNA + S-adenosyl-L-homocysteine + H(+). In terms of biological role, specifically methylates the guanosine in position 1516 of 16S rRNA. In Pseudomonas fluorescens (strain SBW25), this protein is Ribosomal RNA small subunit methyltransferase J.